Reading from the N-terminus, the 320-residue chain is HPr kinase/phosphorylase (320 aa).

Catalysis depends on residues His-141 and Lys-162. 156–163 serves as a coordination point for ATP; sequence GHSGLGKS. Residue Ser-163 coordinates Mg(2+). The active-site Proton acceptor; for phosphorylation activity. Proton donor; for dephosphorylation activity is the Asp-180. An important for the catalytic mechanism of both phosphorylation and dephosphorylation region spans residues 204–213; the sequence is LEVRGLGILN. Glu-205 lines the Mg(2+) pocket. Residue Arg-248 is part of the active site. Positions 269–274 are important for the catalytic mechanism of dephosphorylation; sequence PVAVGR.

The protein belongs to the HPrK/P family. As to quaternary structure, homohexamer. The cofactor is Mg(2+).

It catalyses the reaction [HPr protein]-L-serine + ATP = [HPr protein]-O-phospho-L-serine + ADP + H(+). The catalysed reaction is [HPr protein]-O-phospho-L-serine + phosphate + H(+) = [HPr protein]-L-serine + diphosphate. Its function is as follows. Catalyzes the ATP- as well as the pyrophosphate-dependent phosphorylation of a specific serine residue in HPr, a phosphocarrier protein of the phosphoenolpyruvate-dependent sugar phosphotransferase system (PTS). HprK/P also catalyzes the pyrophosphate-producing, inorganic phosphate-dependent dephosphorylation (phosphorolysis) of seryl-phosphorylated HPr (P-Ser-HPr). In Neisseria meningitidis serogroup B (strain ATCC BAA-335 / MC58), this protein is HPr kinase/phosphorylase.